Reading from the N-terminus, the 179-residue chain is MHAGEAVQQLKKAFETVASFDFRDALSKASTPVTVVATNGPFGLAGLTCSAVCSVCDRPPTVLLCINRKSYAAGIIKSNGVLSVNWLAAGQAVISQTFAGVGSVPMEERFADKGWQTIATGAPYRMDAAVSFDCTIANIVDVGSHSVIFAEVVARNHAEECTPLIYHRRQYATTRSLAE.

48–51 is an FAD binding site; it reads TCSA. 54 to 57 is an NAD(+) binding site; the sequence is SVCD. Residues 65–71, alanine 99, 104–109, and serine 144 each bind FAD; these read CINRKSY and VPMEER. NAD(+)-binding positions include histidine 145 and 166–169; that span reads YHRR. Tyrosine 166 serves as a coordination point for FAD.

The protein belongs to the non-flavoprotein flavin reductase family. As to quaternary structure, homodimer. The chlorophenol-4-monooxygenase is composed of an oxygenase component TftD and a reductase component TftC.

It carries out the reaction FADH2 + NAD(+) = FAD + NADH + 2 H(+). Its pathway is xenobiotic degradation. In terms of biological role, reductase component of a two-component system that degrades 2,4,5-trichlorophenol. TftC provides the FADH(2) required by TftD. TftD oxidizes 2,4,5-trichlorophenol (2,4,5-TCP) to 2,5-dichloro-p-benzoquinone, which is chemically reduced to 2,5-dichloro-p-hydroquinone (2,5-DiCHQ). Then, TftD oxidizes the latter to 5-chloro-2-hydroxy-p-benzoquinone. The sequence is that of NADH:FAD oxidoreductase (tftC) from Burkholderia cepacia (Pseudomonas cepacia).